The following is a 37-amino-acid chain: Mu-cyrtautoxin-As1a (37 aa).

4 cysteine pairs are disulfide-bonded: Cys1-Cys15, Cys8-Cys19, Cys14-Cys35, and Cys26-Cys31.

The protein belongs to the neurotoxin 13 (insecticidal toxin ABC) family. 01 (Aps III) subfamily. Expressed by the venom gland.

The protein resides in the secreted. Functionally, the recombinant mu-cyrtautoxin-As1a potently and voltage-independently blocks voltage-gated sodium channels (Nav) of insects. It acts by pluging the outer vestibule of the channel. It acts in combination with a weak (30%) voltage-independent block of insect voltage-gated calcium (Cav) channels (low-voltage and high-voltage channels). Tested on DUM neurons, it inhibits sodium currents with an IC(50) of 540 nM (and a Hill coefficient &gt;1, reflecting an incomplete block at higher concentrations). In vivo, it induces flaccid paralysis in adult Australian sheep blowfly Lucilia cuprina. It is both paralytic and lethal, when injected into lepidopteran larvae. It is a slower acting toxin, being lethal at 24 hours, but not paralytic at 1 hour post-injection. This chain is Mu-cyrtautoxin-As1a, found in Apomastus schlingeri (Trap-door spider).